We begin with the raw amino-acid sequence, 30 residues long: MKKPVLKPFASLEIKVDPPITIGETSLGLR.

This is an uncharacterized protein from Bacillus subtilis (strain 168).